Consider the following 432-residue polypeptide: DEAD-box ATP-dependent RNA helicase 56 (432 aa).

Residues 1–28 (MAEAEVKDNEVYEEDLVDYEEEVENGTD) are a coiled coil. The short motif at 51-79 (SGFRDFLLKPELLRAIQDCGFEHPSEVQH) is the Q motif element. In terms of domain architecture, Helicase ATP-binding spans 82–255 (IPQAILGMDV…KKFMQDPMEI (174 aa)). ATP is bound at residue 95–102 (AKSGMGKT). The DEAD box signature appears at 202–205 (DECD). The Helicase C-terminal domain occupies 283–428 (KLNDLLDALD…ELPEQIDTST (146 aa)).

It belongs to the DEAD box helicase family. DECD subfamily. In terms of assembly, homodimer and heterodimer with AIP2. Interacts with API5.

The protein localises to the nucleus. The enzyme catalyses ATP + H2O = ADP + phosphate + H(+). Its function is as follows. ATP-binding RNA helicase involved in pre-mRNA splicing. Required for the export of mRNA out of the nucleus. Required for tapetal programmed cell death (PCD) and degeneration during anther development. Forms dimer with AIP2 and binds the promoter region of the cysteine protease CP1. Can complement the yeast RNA helicase SUB2. Plants silencing AIP1 and AIP2 are male sterile. This chain is DEAD-box ATP-dependent RNA helicase 56, found in Oryza sativa subsp. japonica (Rice).